Consider the following 327-residue polypeptide: Small ribosomal subunit protein uS2 (327 aa).

The tract at residues Ala258–Glu327 is disordered.

This sequence belongs to the universal ribosomal protein uS2 family.

The chain is Small ribosomal subunit protein uS2 from Anaplasma marginale (strain St. Maries).